We begin with the raw amino-acid sequence, 90 residues long: Small ribosomal subunit protein uS15c (90 aa).

This sequence belongs to the universal ribosomal protein uS15 family. Part of the 30S ribosomal subunit.

The protein localises to the plastid. Its subcellular location is the chloroplast. The sequence is that of Small ribosomal subunit protein uS15c (rps15-A) from Ipomoea purpurea (Common morning glory).